The chain runs to 232 residues: MAKISKRRQAFEAKVDRQKLYAIEDALALVKECASAKFNESIDVAVQLGIDAKKSDQVVRGSVVLPAGTGKSVRVAVFAQGEKAEQARAAGAEIVGMEDLAEQIKAGQMDFDIVIASPDTMRIVGTLGQILGPRGLMPNPKVGTVTPDVATAVKNAKAGQVQFRVDKAGIIHATIGRASFEATALRSNLSALIEALQKAKPATSKGVYLRKIALSSTMGVGVRVDQATLAAQ.

The protein belongs to the universal ribosomal protein uL1 family. Part of the 50S ribosomal subunit.

Its function is as follows. Binds directly to 23S rRNA. The L1 stalk is quite mobile in the ribosome, and is involved in E site tRNA release. Protein L1 is also a translational repressor protein, it controls the translation of the L11 operon by binding to its mRNA. This chain is Large ribosomal subunit protein uL1, found in Burkholderia vietnamiensis (strain G4 / LMG 22486) (Burkholderia cepacia (strain R1808)).